We begin with the raw amino-acid sequence, 696 residues long: Tensin-4 (696 aa).

An N-terminal signal peptide occupies residues 1–14 (MSSSLLAGGHMVSL). Disordered stretches follow at residues 157–246 (LDGP…RAPQ), 271–344 (SLPH…CPAS), and 356–416 (LING…KDMQ). The span at 192 to 203 (SSSNESLIFSGN) shows a compositional bias: polar residues. At S230 the chain carries Phosphoserine. Positions 271–304 (SLPHSSLSSYPSSSRSLGSPASSSSSLHSLDRGS) are enriched in low complexity. Composition is skewed to polar residues over residues 326 to 344 (QAVQ…CPAS) and 372 to 397 (PGHQ…SPSK). One can recognise an SH2 domain in the interval 429–536 (WFKPSITREQ…ALPCKLTIPQ (108 aa)). Residues 563–690 (CHTLYLSSVS…QVISLVTALL (128 aa)) enclose the PTB domain.

The protein belongs to the PTEN phosphatase protein family. In terms of assembly, interacts (via SH2 domain) with Rho GTPase-activating protein DLC1 (via C-terminus); the interaction is independent of DLC1 tyrosine phosphorylation. Interacts with integrin ITGB1; the interaction displaces tensin TNS3 from the ITGB1 cytoplasmic tail and promotes ITGB1 stability. Interacts (via SH2 domain) with E3 ubiquitin-protein ligase CBL (phosphorylated on 'Tyr-780'); the interaction is enhanced in the presence of EGF and reduces interaction of CBL with EGFR. Interacts (via SH2 domain) with receptor tyrosine kinase MET (when phosphorylated); the interaction increases MET protein stability.

It localises to the cell junction. The protein localises to the focal adhesion. The protein resides in the cytoplasm. Its subcellular location is the cytoskeleton. Functionally, promotes EGF-induced cell migration by displacing tensin TNS3 from the cytoplasmic tail of integrin ITGB1 which results in dissociation of TNS3 from focal adhesions, disassembly of actin stress fibers and initiation of cell migration. Suppresses ligand-induced degradation of EGFR by reducing EGFR ubiquitination in the presence of EGF. Increases MET protein stability by inhibiting MET endocytosis and subsequent lysosomal degradation which leads to increased cell survival, proliferation and migration. This Mus musculus (Mouse) protein is Tensin-4 (Tns4).